We begin with the raw amino-acid sequence, 704 residues long: Ankyrin repeat and LEM domain-containing protein 1 homolog (704 aa).

The interval methionine 1 to lysine 29 is disordered. Over residues threonine 8–serine 22 the composition is skewed to low complexity. 2 ANK repeats span residues lysine 28–alanine 59 and aspartate 63–alanine 93. Disordered stretches follow at residues asparagine 247–threonine 293, asparagine 314–threonine 358, and serine 381–aspartate 421. Over residues arginine 276–serine 288 the composition is skewed to basic residues. 2 stretches are compositionally biased toward low complexity: residues glutamate 329–threonine 346 and alanine 384–serine 405. An LEM domain is found at isoleucine 425 to isoleucine 470. Positions tyrosine 525–lysine 635 constitute a GIY-YIG domain.

In terms of processing, phosphorylated. Phosphorylated during telophase when localized at the midbody.

The protein localises to the cytoplasm. It localises to the nucleus. It is found in the chromosome. Its subcellular location is the midbody. The protein resides in the cytoskeleton. The protein localises to the spindle. Inhibited by EDTA. Functionally, endonuclease which, in association with baf-1, plays an essential role during embryogenesis in the DNA repair response following DNA damage probably by ensuring proper chromosome segregation. Also required during postembryonic cell divisions after DNA damage caused by ionizing radiation to ensure normal cell proliferation. Resolves chromatin bridges in late mitosis that result from incomplete DNA replication, defective chromosome condensation or unresolved recombination intermediates. Together with brc-1, contributes to genome integrity by resolving mitotic chromatin bridges that result from incomplete processing of DNA breaks. In parallel to the slx-1/mus-81 pathway, acts in processing early recombination intermediates in meiotic prophase I to prevent illegitimate recombination. Also involved in processing remaining, erroneous recombination intermediates that persist into the second meiotic division. The protein is Ankyrin repeat and LEM domain-containing protein 1 homolog of Caenorhabditis elegans.